The chain runs to 585 residues: Arginine--tRNA ligase (585 aa).

A 'HIGH' region motif is present at residues 131-141 (ANPTGPMHVGH).

Belongs to the class-I aminoacyl-tRNA synthetase family. In terms of assembly, monomer.

It localises to the cytoplasm. It carries out the reaction tRNA(Arg) + L-arginine + ATP = L-arginyl-tRNA(Arg) + AMP + diphosphate. The polypeptide is Arginine--tRNA ligase (Brucella canis (strain ATCC 23365 / NCTC 10854 / RM-666)).